The primary structure comprises 384 residues: L-cysteine:1D-myo-inositol 2-amino-2-deoxy-alpha-D-glucopyranoside ligase (384 aa).

A Zn(2+)-binding site is contributed by C16. Residues 16–19, T31, and 54–56 contribute to the L-cysteinyl-5'-AMP site; these read CGIT and NVT. The 'HIGH' region signature appears at 18-28; it reads ITPYDATHLGH. Positions 159–164 match the 'ERGGDP' region motif; sequence ERGGDP. W199 is a binding site for L-cysteinyl-5'-AMP. C203 is a Zn(2+) binding site. Residue 221–223 participates in L-cysteinyl-5'-AMP binding; it reads GSD. Zn(2+) is bound at residue H228. I255 lines the L-cysteinyl-5'-AMP pocket. The short motif at 261–265 is the 'KMSKS' region element; it reads KMSKS.

Belongs to the class-I aminoacyl-tRNA synthetase family. MshC subfamily. Monomer. It depends on Zn(2+) as a cofactor.

It carries out the reaction 1D-myo-inositol 2-amino-2-deoxy-alpha-D-glucopyranoside + L-cysteine + ATP = 1D-myo-inositol 2-(L-cysteinylamino)-2-deoxy-alpha-D-glucopyranoside + AMP + diphosphate + H(+). Functionally, catalyzes the ATP-dependent condensation of GlcN-Ins and L-cysteine to form L-Cys-GlcN-Ins. In Mycobacterium avium (strain 104), this protein is L-cysteine:1D-myo-inositol 2-amino-2-deoxy-alpha-D-glucopyranoside ligase.